Reading from the N-terminus, the 154-residue chain is Transcriptional repressor NrdR (154 aa).

A zinc finger lies at 3–34 (CPFCGANDTKVIDSRLVAEGEQVRRRRECLAC). The ATP-cone domain occupies 49-139 (PRLIKTDGSR…VYRRFQDLNE (91 aa)).

It belongs to the NrdR family. It depends on Zn(2+) as a cofactor.

In terms of biological role, negatively regulates transcription of bacterial ribonucleotide reductase nrd genes and operons by binding to NrdR-boxes. The polypeptide is Transcriptional repressor NrdR (Pseudomonas fluorescens (strain ATCC BAA-477 / NRRL B-23932 / Pf-5)).